We begin with the raw amino-acid sequence, 756 residues long: 5-methyltetrahydropteroyltriglutamate--homocysteine methyltransferase (756 aa).

5-methyltetrahydropteroyltri-L-glutamate-binding positions include R15–K18 and K111. Positions G392–R411 are disordered. Basic and acidic residues predominate over residues L399 to R411. L-homocysteine contacts are provided by residues I429 to S431 and E482. Residues I429–S431 and E482 contribute to the L-methionine site. 5-methyltetrahydropteroyltri-L-glutamate is bound by residues R513 to C514 and W559. Position 597 (D597) interacts with L-homocysteine. D597 contacts L-methionine. E603 serves as a coordination point for 5-methyltetrahydropteroyltri-L-glutamate. Residues H639, C641, and E663 each contribute to the Zn(2+) site. H692 serves as the catalytic Proton donor. C724 contacts Zn(2+).

The protein belongs to the vitamin-B12 independent methionine synthase family. The cofactor is Zn(2+).

The catalysed reaction is 5-methyltetrahydropteroyltri-L-glutamate + L-homocysteine = tetrahydropteroyltri-L-glutamate + L-methionine. It functions in the pathway amino-acid biosynthesis; L-methionine biosynthesis via de novo pathway; L-methionine from L-homocysteine (MetE route): step 1/1. Catalyzes the transfer of a methyl group from 5-methyltetrahydrofolate to homocysteine resulting in methionine formation. The sequence is that of 5-methyltetrahydropteroyltriglutamate--homocysteine methyltransferase from Halalkalibacterium halodurans (strain ATCC BAA-125 / DSM 18197 / FERM 7344 / JCM 9153 / C-125) (Bacillus halodurans).